The following is a 332-amino-acid chain: ADP-L-glycero-D-manno-heptose-6-epimerase (332 aa).

NADP(+) contacts are provided by residues 11–12 (FI), 32–33 (DN), K39, K54, 76–80 (EGACS), and N93. The active-site Proton acceptor is the Y140. Residue K144 coordinates NADP(+). A substrate-binding site is contributed by N170. V171 and K179 together coordinate NADP(+). The Proton acceptor role is filled by K179. Substrate is bound by residues R181, H188, 202-205 (FEGS), R215, and Y294.

This sequence belongs to the NAD(P)-dependent epimerase/dehydratase family. HldD subfamily. As to quaternary structure, homopentamer. NADP(+) serves as cofactor.

It catalyses the reaction ADP-D-glycero-beta-D-manno-heptose = ADP-L-glycero-beta-D-manno-heptose. It participates in nucleotide-sugar biosynthesis; ADP-L-glycero-beta-D-manno-heptose biosynthesis; ADP-L-glycero-beta-D-manno-heptose from D-glycero-beta-D-manno-heptose 7-phosphate: step 4/4. Catalyzes the interconversion between ADP-D-glycero-beta-D-manno-heptose and ADP-L-glycero-beta-D-manno-heptose via an epimerization at carbon 6 of the heptose. This Dechloromonas aromatica (strain RCB) protein is ADP-L-glycero-D-manno-heptose-6-epimerase.